Here is a 110-residue protein sequence, read N- to C-terminus: UPF0122 protein GWCH70_1086 (110 aa).

It belongs to the UPF0122 family.

Its function is as follows. Might take part in the signal recognition particle (SRP) pathway. This is inferred from the conservation of its genetic proximity to ftsY/ffh. May be a regulatory protein. The chain is UPF0122 protein GWCH70_1086 from Geobacillus sp. (strain WCH70).